Here is a 362-residue protein sequence, read N- to C-terminus: Chorismate synthase (362 aa).

R47 is a binding site for NADP(+). FMN-binding positions include 124–126, G286, 301–305, and R327; these read RSS and KPTAT.

Belongs to the chorismate synthase family. In terms of assembly, homotetramer. The cofactor is FMNH2.

The enzyme catalyses 5-O-(1-carboxyvinyl)-3-phosphoshikimate = chorismate + phosphate. Its pathway is metabolic intermediate biosynthesis; chorismate biosynthesis; chorismate from D-erythrose 4-phosphate and phosphoenolpyruvate: step 7/7. Catalyzes the anti-1,4-elimination of the C-3 phosphate and the C-6 proR hydrogen from 5-enolpyruvylshikimate-3-phosphate (EPSP) to yield chorismate, which is the branch point compound that serves as the starting substrate for the three terminal pathways of aromatic amino acid biosynthesis. This reaction introduces a second double bond into the aromatic ring system. The sequence is that of Chorismate synthase from Rippkaea orientalis (strain PCC 8801 / RF-1) (Cyanothece sp. (strain PCC 8801)).